The primary structure comprises 488 residues: Capsid protein (488 aa).

Positions 80–93 are enriched in acidic residues; sequence ISEDESDSGEEPEF. Residues 80 to 143 form a disordered region; that stretch reads ISEDESDSGE…QPKTIPGQKQ (64 aa). A compositionally biased stretch (basic and acidic residues) spans 94-109; it reads EQVRMDRTGGTEIPKE. The Nuclear localization signal signature appears at 121-124; it reads RKRK. Polar residues predominate over residues 134-143; the sequence is QPKTIPGQKQ. Residues 410-427 form a CCHC-type zinc finger; the sequence is CRCWICNIEGHYANECPN. A disordered region spans residues 463-488; it reads YKEEEEETSTEESDDESSTSEDSDSD. Residues 464 to 488 show a composition bias toward acidic residues; the sequence is KEEEEETSTEESDDESSTSEDSDSD.

The protein belongs to the caulimoviridae capsid protein family. Interacts (via nuclear localization signal) with host importin alpha.

It localises to the virion. It is found in the host nucleus. In terms of biological role, self assembles to form an icosahedral capsid, about 50 nm in diameter, nm, composed of 420 subunits of the viral capsid protein. The capsid encapsulates the genomic dsDNA. Following virus entry into host cell, provides nuclear import of the viral genome. Virus particles do not enter the nucleus, but dock at the nuclear membrane through the interaction with host importins. The polypeptide is Capsid protein (Arabidopsis thaliana (Mouse-ear cress)).